The following is a 165-amino-acid chain: Pro-MCH (165 aa).

Positions methionine 1–glycine 21 are cleaved as a signal peptide. Positions aspartate 69–threonine 82 are enriched in basic and acidic residues. The interval aspartate 69–glutamine 89 is disordered. Residue isoleucine 143 is modified to Isoleucine amide. A disulfide bridge links cysteine 153 with cysteine 162.

The protein belongs to the melanin-concentrating hormone family. Pro-MCH is processed differentially in the brain and in peripheral organs producing two neuropeptides; NEI and MCH. A third peptide, NGE, may also be produced. Preferential processing in neurons by prohormone convertase 2 (PC2) generates NEI. MCH is generated in neurons of the lateral hypothalmic area by several prohormone convertases including PC1/3, PC2 and PC5/6. MCH is present in all regions of the brain and in neurointermediate lobe of the pituarity gland, with highest concentrations in the hypothalamus. Also expressed to a much lesser extent in stomach, lamina propria of both duodenum and colon, ovary, thymus, pancreas, adrenal gland and testis (spermatogonia, early spermatocytes and Sertoli cells). Weak expression in heart and lung. The other peptides are expressed at least in Sertoli cells, nei being also expressed in brain, stomach and proximal duodenum. In brain exclusively mature mch and nei peptides are present. In peripheral tissues a large product, encompassing the NEI and MCH domains of the precursor, is found predominantly. At low levels fully processed MCH and NEI peptides are present in gut. No expression in peripheral blood.

The protein localises to the secreted. Its function is as follows. MCH inhibits ACTH secretion at the end of the light on period which corresponds to the peak of the circadian rhythm in ACTH. Inhibits also stress induced ACTH release during the light off period of the cycle. Involved as a neurotransmitter or neuromodulator in a broad array of neuronal functions. Stimulates sexual behavior when injected into the ventromedial nucleus, this effect is antagonized by NEI. In the medial preoptic area, stimulates anxiety and sexual behavior. Antagonizes inhibitory effect of melanotropin alpha on exploration behavior. NEI can influence differentiation of neuronal processes in brain neurons. Affects the content of neurofilament protein in neuritogenesis (in vitro). May also be a neuromodulatory factor. In behavioral tests, it stimulates exploration and anxiety when injected into the ventromedial nucleus. Also stimulates grooming, locomotion and rearing. May antagonize the inhibitory effect of mch on ACTH release. Reduces dopamine and dopac release in the ventromedial nucleus. This Rattus norvegicus (Rat) protein is Pro-MCH (Pmch).